An 81-amino-acid chain; its full sequence is Metallocarboxypeptidase inhibitor (81 aa).

The N-terminal stretch at 1 to 15 (MFLLVFLCCLHLVIS) is a signal peptide. Intrachain disulfides connect Cys-25-Cys-48, Cys-32-Cys-76, Cys-33-Cys-57, and Cys-36-Cys-72.

In terms of biological role, tightly binding, competitive inhibitor of different types of pancreatic-like carboxypeptidases. Inhibits human CPA4. This Hirudo medicinalis (Medicinal leech) protein is Metallocarboxypeptidase inhibitor.